We begin with the raw amino-acid sequence, 1079 residues long: Ubiquitin carboxyl-terminal hydrolase 26 (1079 aa).

Residues 1–12 (MSRPNTRNKSKR) are compositionally biased toward basic residues. Positions 1-21 (MSRPNTRNKSKRPRADDCESP) are disordered. The region spanning 106-446 (AGLTNLGATC…DAYMLMYKRI (341 aa)) is the USP domain. The Nucleophile role is filled by Cys-115. Residue His-359 is the Proton acceptor of the active site. Positions 384 to 419 (GLHPFGEKPGKSSDKTDQKPQGSSTADSVTNDDNNS) are disordered. Basic and acidic residues predominate over residues 388-401 (FGEKPGKSSDKTDQ). A compositionally biased stretch (polar residues) spans 402–417 (KPQGSSTADSVTNDDN). DUSP domains follow at residues 495–598 (AYIT…DDFC), 613–715 (DVYR…FPSD), and 738–862 (AVKL…AEIV). A disordered region spans residues 948–972 (EASAAVPVPDRRTSKRSRRTTSGNS). Residues 961–1037 (SKRSRRTTSG…LWVKDSEIYE (77 aa)) form the Ubiquitin-like domain.

The protein belongs to the peptidase C19 family.

It localises to the nucleus. The catalysed reaction is Thiol-dependent hydrolysis of ester, thioester, amide, peptide and isopeptide bonds formed by the C-terminal Gly of ubiquitin (a 76-residue protein attached to proteins as an intracellular targeting signal).. In terms of biological role, recognizes and hydrolyzes the peptide bond at the C-terminal Gly of ubiquitin. Involved in the processing of poly-ubiquitin precursors as well as that of ubiquitinated proteins. Deubiquitinates H2BK143ub1 of histone H2B. The polypeptide is Ubiquitin carboxyl-terminal hydrolase 26 (UBP26) (Oryza sativa subsp. japonica (Rice)).